We begin with the raw amino-acid sequence, 392 residues long: Metacaspase-1 (392 aa).

Over residues 1-14 (MYPGSGNYSYNNRP) the composition is skewed to polar residues. The disordered stretch occupies residues 1 to 87 (MYPGSGNYSY…PSSIQQGNGQ (87 aa)). Residues 41–51 (QQQQYQDQYQG) are compositionally biased toward low complexity. Over residues 53–63 (NRGQYQGQYQD) the composition is skewed to polar residues. Residues histidine 182 and cysteine 238 contribute to the active site.

Belongs to the peptidase C14B family.

Functionally, involved in cell death (apoptosis). The polypeptide is Metacaspase-1 (MCA1) (Candida glabrata (strain ATCC 2001 / BCRC 20586 / JCM 3761 / NBRC 0622 / NRRL Y-65 / CBS 138) (Yeast)).